A 94-amino-acid polypeptide reads, in one-letter code: Co-chaperonin GroES (94 aa).

Belongs to the GroES chaperonin family. As to quaternary structure, heptamer of 7 subunits arranged in a ring. Interacts with the chaperonin GroEL.

It is found in the cytoplasm. In terms of biological role, together with the chaperonin GroEL, plays an essential role in assisting protein folding. The GroEL-GroES system forms a nano-cage that allows encapsulation of the non-native substrate proteins and provides a physical environment optimized to promote and accelerate protein folding. GroES binds to the apical surface of the GroEL ring, thereby capping the opening of the GroEL channel. The polypeptide is Co-chaperonin GroES (Streptococcus pneumoniae (strain 70585)).